Consider the following 195-residue polypeptide: Peptidyl-tRNA hydrolase (195 aa).

Tyrosine 18 provides a ligand contact to tRNA. The Proton acceptor role is filled by histidine 23. TRNA is bound by residues phenylalanine 69, asparagine 71, and asparagine 117.

The protein belongs to the PTH family. Monomer.

Its subcellular location is the cytoplasm. The catalysed reaction is an N-acyl-L-alpha-aminoacyl-tRNA + H2O = an N-acyl-L-amino acid + a tRNA + H(+). Its function is as follows. Hydrolyzes ribosome-free peptidyl-tRNAs (with 1 or more amino acids incorporated), which drop off the ribosome during protein synthesis, or as a result of ribosome stalling. Catalyzes the release of premature peptidyl moieties from peptidyl-tRNA molecules trapped in stalled 50S ribosomal subunits, and thus maintains levels of free tRNAs and 50S ribosomes. In Alcanivorax borkumensis (strain ATCC 700651 / DSM 11573 / NCIMB 13689 / SK2), this protein is Peptidyl-tRNA hydrolase.